The sequence spans 189 residues: Crossover junction endodeoxyribonuclease RuvC (189 aa).

Catalysis depends on residues D8, E67, and D139. Residues D8, E67, and D139 each coordinate Mg(2+).

Belongs to the RuvC family. In terms of assembly, homodimer which binds Holliday junction (HJ) DNA. The HJ becomes 2-fold symmetrical on binding to RuvC with unstacked arms; it has a different conformation from HJ DNA in complex with RuvA. In the full resolvosome a probable DNA-RuvA(4)-RuvB(12)-RuvC(2) complex forms which resolves the HJ. It depends on Mg(2+) as a cofactor.

Its subcellular location is the cytoplasm. It catalyses the reaction Endonucleolytic cleavage at a junction such as a reciprocal single-stranded crossover between two homologous DNA duplexes (Holliday junction).. Functionally, the RuvA-RuvB-RuvC complex processes Holliday junction (HJ) DNA during genetic recombination and DNA repair. Endonuclease that resolves HJ intermediates. Cleaves cruciform DNA by making single-stranded nicks across the HJ at symmetrical positions within the homologous arms, yielding a 5'-phosphate and a 3'-hydroxyl group; requires a central core of homology in the junction. The consensus cleavage sequence is 5'-(A/T)TT(C/G)-3'. Cleavage occurs on the 3'-side of the TT dinucleotide at the point of strand exchange. HJ branch migration catalyzed by RuvA-RuvB allows RuvC to scan DNA until it finds its consensus sequence, where it cleaves and resolves the cruciform DNA. The protein is Crossover junction endodeoxyribonuclease RuvC of Histophilus somni (strain 129Pt) (Haemophilus somnus).